Consider the following 798-residue polypeptide: MNLQLIFWIGLISSVCCVFGQADEDRCLKANAKSCGECIQAGPNCGWCTNSTFLQEGMPTSARCDDLEALKKKGCHPNDTENPRGSKDIKKNKNVTNRSKGTAEKLQPEDITQIQPQQLVLQLRSGEPQTFTLKFKRAEDYPIDLYYLMDLSYSMKDDLENVKSLGTDLMNEMRRITSDFRIGFGSFVEKTVMPYISTTPAKLRNPCTNEQNCTSPFSYKNVLSLTDKGEVFNELVGKQRISGNLDSPEGGFDAIMQVAVCGSLIGWRNVTRLLVFSTDAGFHFAGDGKLGGIVLPNDGQCHLKNDVYTMSHYYDYPSIAHLVQKLSENNIQTIFAVTEEFQPVYKELKNLIPKSAVGTLSANSSNVIQLIIDAYNSLSSEVILENSKLPEGVTINYKSYCKNGVNGTGENGRKCSNISIGDEVQFEISITANKCPDKNSETIKIKPLGFTEEVEIILQFICECECQGEGIPGSPKCHDGNGTFECGACRCNEGRVGRHCECSTDEVNSEDMDAYCRKENSSEICSNNGECVCGQCVCRKRDNTNEIYSGKFCECDNFNCDRSNGLICGGNGVCKCRVCECNPNYTGSACDCSLDTTSCMAVNGQICNGRGVCECGACKCTDPKFQGPTCEMCQTCLGVCAEHKECVQCRAFNKGEKKDTCAQECSHFNITKVENRDKLPQPGQVDPLSHCKEKDVDDCWFYFTYSVNGNNEATVHVVETPECPTGPDIIPIVAGVVAGIVLIGLALLLIWKLLMIIHDRREFAKFEKERMNAKWDTGENPIYKSAVTTVVNPKYEGK.

Positions 1–20 (MNLQLIFWIGLISSVCCVFG) are cleaved as a signal peptide. Residues 21-728 (QADEDRCLKA…ETPECPTGPD (708 aa)) are Extracellular-facing. The 51-residue stretch at 26-76 (RCLKANAKSCGECIQAGPNCGWCTNSTFLQEGMPTSARCDDLEALKKKGCH) folds into the PSI domain. Cystine bridges form between Cys27/Cys45, Cys35/Cys464, Cys38/Cys64, Cys48/Cys75, Cys207/Cys213, Cys261/Cys301, Cys401/Cys415, Cys435/Cys462, Cys466/Cys486, Cys477/Cys489, Cys491/Cys500, Cys502/Cys533, Cys516/Cys531, Cys525/Cys536, Cys538/Cys553, Cys555/Cys576, Cys560/Cys574, Cys568/Cys579, Cys581/Cys590, Cys592/Cys615, Cys599/Cys613, Cys607/Cys618, Cys620/Cys630, Cys633/Cys636, Cys640/Cys691, Cys646/Cys665, Cys649/Cys661, and Cys699/Cys723. Residues 75–91 (CHPNDTENPRGSKDIKK) show a composition bias toward basic and acidic residues. Residues 75–105 (CHPNDTENPRGSKDIKKNKNVTNRSKGTAEK) form a disordered region. N-linked (GlcNAc...) asparagine glycans are attached at residues Asn94 and Asn97. Residues 140–378 (DYPIDLYYLM…QLIIDAYNSL (239 aa)) enclose the VWFA domain. Positions 152 and 154 each coordinate Mg(2+). 4 residues coordinate Ca(2+): Ser154, Asp157, Asp158, and Glu189. Positions 207–213 (CTNEQNC) are CX3CL1-binding. Asn212 carries an N-linked (GlcNAc...) asparagine glycan. Ca(2+)-binding residues include Asn244, Asp246, Pro248, and Glu249. Glu249 is a Mg(2+) binding site. A glycan (N-linked (GlcNAc...) asparagine) is linked at Asn269. The tract at residues 295–314 (LPNDGQCHLKNDVYTMSHYY) is CX3CL1-binding. Ala362 contributes to the Ca(2+) binding site. Residues 383–465 (ILENSKLPEG…IILQFICECE (83 aa)) are interaction with TMEM182. Asn406 and Asn417 each carry an N-linked (GlcNAc...) asparagine glycan. 4 I-EGF domains span residues 466–501 (CQGEGIPGSPKCHDGNGTFECGACRCNEGRVGRHCE), 502–554 (CSTD…KFCE), 555–591 (CDNFNCDRSNGLICGGNGVCKCRVCECNPNYTGSACD), and 592–631 (CSLDTTSCMAVNGQICNGRGVCECGACKCTDPKFQGPTCE). Residue Asn481 is glycosylated (N-linked (GlcNAc...) asparagine). An N-linked (GlcNAc...) asparagine glycan is attached at Asn520. Asn584 carries an N-linked (GlcNAc...) asparagine glycan. Asn669 carries N-linked (GlcNAc...) asparagine glycosylation. The helical transmembrane segment at 729–749 (IIPIVAGVVAGIVLIGLALLL) threads the bilayer. Over 750-798 (IWKLLMIIHDRREFAKFEKERMNAKWDTGENPIYKSAVTTVVNPKYEGK) the chain is Cytoplasmic. The signal for sorting from recycling endosomes; interaction with ACAP1 stretch occupies residues 762-767 (EFAKFE). Thr777 is subject to Phosphothreonine. At Tyr783 the chain carries Phosphotyrosine. At Ser785 the chain carries Phosphoserine. The interaction with ITGB1BP1 stretch occupies residues 785–792 (SAVTTVVN). Residue Thr789 is modified to Phosphothreonine. Lys794 bears the N6-acetyllysine; alternate mark. A Glycyl lysine isopeptide (Lys-Gly) (interchain with G-Cter in SUMO1); alternate cross-link involves residue Lys794.

The protein belongs to the integrin beta chain family. As to quaternary structure, interacts with seprase FAP (seprase); the interaction occurs at the cell surface of invadopodia membrane in a collagen-dependent manner. Heterodimer of an alpha and a beta subunit. Beta-1 associates with either alpha-1, alpha-2, alpha-3, alpha-4, alpha-5, alpha-6, alpha-7, alpha-8, alpha-9, alpha-10, alpha-11 or alpha-V. ITGA6:ITGB1 is found in a complex with CD9; interaction takes place in oocytes and is involved in sperm-egg fusion. Binds LGALS3BP and NMRK2, when associated with alpha-7, but not with alpha-5. Interacts with FLNA, FLNB, FLNC and RANBP9. Interacts with KRT1 in the presence of RACK1 and SRC. Interacts with JAML; integrin alpha-4/beta-1 may regulate leukocyte to endothelial cells adhesion by controlling JAML homodimerization. Interacts with RAB21. Interacts (via the cytoplasmic region) with RAB25 (via the hypervariable C-terminal region). Interacts with MYO10. Interacts with ITGB1BP1 (via C-terminal region); the interaction is a prerequisite for focal adhesion disassembly. Interacts with TLN1; the interaction is prevented by competitive binding of ITGB1BP1. Interacts with ACAP1; required for ITGB1 recycling. Interacts with ASAP3. Interacts with FERMT2; the interaction is inhibited in presence of ITGB1BP1. Interacts with DAB2. Interacts with FGR and HCK. Interacts with alpha-7A and alpha-7B in adult skeletal muscle. Interacts with alpha-7B in cardiomyocytes of adult heart. Interacts with EMP2; the interaction may be direct or indirect and ITGB1 has a heterodimer form. ITGA5:ITGB1 interacts with CCN3. ITGA4:ITGB1 is found in a ternary complex with CX3CR1 and CX3CL1. ITGA5:ITGB1 interacts with FBN1. ITGA5:ITGB1 acts as a receptor for fibronectin FN1 and mediates R-G-D-dependent cell adhesion to FN1. ITGA5:ITGB1 interacts with IL1B. Interacts with MDK. ITGA4:ITGB1 interacts with MDK; this interaction mediates MDK-induced osteoblast cells migration through PXN phosphorylation. ITGA6:ITGB1 interacts with MDK; this interaction mediates MDK-induced neurite-outgrowth. ITGA5:ITGB1 interacts with ACE2. Interacts with TMEM182 and LAMB1. Interacts with tensin TNS3; TNS3 also interacts with PEAK1, thus acting as an adapter molecule to bridge the association of PEAK1 with ITGB1. Interacts with tensin TNS4; the interaction displaces tensin TNS3 from the ITGB1 cytoplasmic tail and promotes ITGB1 stability. Integrin ITGA9:ITGB1 interacts with SPP1/OPN (via N-terminus). Integrin ITGA9:ITGB1 interacts with TNC/TNFN3 (via the 3rd Fibronectin type-III domain). Integrins ITGA4:ITGB1 and ITGA9:ITGB1 interact with SVEP1 (via Sushi domain 21); thereby inhibit Ca(2+) intracellular signaling and as a result repress vasocontraction. ITGA4:ITGB1 and ITGA5:ITGB1 interacts with SELP. Interacts with CD248. ITGA5:ITGB1 interacts with IGFBP1. ITGA4:ITGB1 interacts with BCAM. Interacts with ADGRG6.

The protein resides in the cell membrane. Its subcellular location is the cell projection. It is found in the invadopodium membrane. It localises to the ruffle membrane. The protein localises to the recycling endosome. The protein resides in the melanosome. Its subcellular location is the cell junction. It is found in the focal adhesion. It localises to the lamellipodium. The protein localises to the ruffle. Its function is as follows. Integrins alpha-1/beta-1, alpha-2/beta-1, alpha-10/beta-1 and alpha-11/beta-1 are receptors for collagen. Integrins alpha-1/beta-1 and alpha-2/beta-2 recognize the proline-hydroxylated sequence G-F-P-G-E-R in collagen. Integrins alpha-2/beta-1, alpha-3/beta-1, alpha-4/beta-1, alpha-5/beta-1, alpha-8/beta-1, alpha-10/beta-1, alpha-11/beta-1 and alpha-V/beta-1 are receptors for fibronectin. Alpha-4/beta-1 recognizes one or more domains within the alternatively spliced CS-1 and CS-5 regions of fibronectin. Integrin alpha-5/beta-1 is a receptor for fibrinogen. Integrin alpha-1/beta-1, alpha-2/beta-1, alpha-6/beta-1 and alpha-7/beta-1 are receptors for lamimin. Integrin alpha-6/beta-1 (ITGA6:ITGB1) is present in oocytes and is involved in sperm-egg fusion. Integrin alpha-4/beta-1 is a receptor for VCAM1 and recognizes the sequence Q-I-D-S in VCAM1. Integrin alpha-9/beta-1 is a receptor for VCAM1, cytotactin and osteopontin. It recognizes the sequence A-E-I-D-G-I-E-L in cytotactin. Integrin alpha-3/beta-1 is a receptor for epiligrin, thrombospondin and CSPG4. Integrin alpha-3/beta-1 provides a docking site for FAP (seprase) at invadopodia plasma membranes in a collagen-dependent manner and hence may participate in the adhesion, formation of invadopodia and matrix degradation processes, promoting cell invasion. Alpha-3/beta-1 may mediate with LGALS3 the stimulation by CSPG4 of endothelial cells migration. Integrin alpha-V/beta-1 is a receptor for vitronectin. Beta-1 integrins recognize the sequence R-G-D in a wide array of ligands. When associated with alpha-7/beta-1 integrin, regulates cell adhesion and laminin matrix deposition. Involved in promoting endothelial cell motility and angiogenesis. Involved in osteoblast compaction through the fibronectin fibrillogenesis cell-mediated matrix assembly process and the formation of mineralized bone nodules. May be involved in up-regulation of the activity of kinases such as PKC via binding to KRT1. Together with KRT1 and RACK1, serves as a platform for SRC activation or inactivation. Plays a mechanistic adhesive role during telophase, required for the successful completion of cytokinesis. ITGA4:ITGB1 binds to fractalkine (CX3CL1) and may act as its coreceptor in CX3CR1-dependent fractalkine signaling. ITGA4:ITGB1 and ITGA5:ITGB1 bind to PLA2G2A via a site (site 2) which is distinct from the classical ligand-binding site (site 1) and this induces integrin conformational changes and enhanced ligand binding to site 1. ITGA5:ITGB1 acts as a receptor for fibrillin-1 (FBN1) and mediates R-G-D-dependent cell adhesion to FBN1. ITGA5:ITGB1 is a receptor for IL1B and binding is essential for IL1B signaling. ITGA5:ITGB3 is a receptor for soluble CD40LG and is required for CD40/CD40LG signaling. Plays an important role in myoblast differentiation and fusion during skeletal myogenesis. ITGA9:ITGB1 may play a crucial role in SVEP1/polydom-mediated myoblast cell adhesion. Integrins ITGA9:ITGB1 and ITGA4:ITGB1 repress PRKCA-mediated L-type voltage-gated channel Ca(2+) influx and ROCK-mediated calcium sensitivity in vascular smooth muscle cells via their interaction with SVEP1, thereby inhibit vasocontraction. This Camelus bactrianus (Bactrian camel) protein is Integrin beta-1.